A 496-amino-acid chain; its full sequence is Cobyric acid synthase (496 aa).

In terms of domain architecture, GATase cobBQ-type spans 252–442 (DLAVAVIRLP…LHGCFDSDTY (191 aa)). Cys-333 acts as the Nucleophile in catalysis. His-434 is an active-site residue.

This sequence belongs to the CobB/CobQ family. CobQ subfamily.

Its pathway is cofactor biosynthesis; adenosylcobalamin biosynthesis. Catalyzes amidations at positions B, D, E, and G on adenosylcobyrinic A,C-diamide. NH(2) groups are provided by glutamine, and one molecule of ATP is hydrogenolyzed for each amidation. The polypeptide is Cobyric acid synthase (Desulforudis audaxviator (strain MP104C)).